Consider the following 408-residue polypeptide: DNA-directed RNA polymerase subunit Rpo1C (408 aa).

This sequence belongs to the RNA polymerase beta' chain family. As to quaternary structure, part of the RNA polymerase complex.

The protein resides in the cytoplasm. The enzyme catalyses RNA(n) + a ribonucleoside 5'-triphosphate = RNA(n+1) + diphosphate. DNA-dependent RNA polymerase (RNAP) catalyzes the transcription of DNA into RNA using the four ribonucleoside triphosphates as substrates. Forms part of the jaw domain. The protein is DNA-directed RNA polymerase subunit Rpo1C of Methanosarcina mazei (strain ATCC BAA-159 / DSM 3647 / Goe1 / Go1 / JCM 11833 / OCM 88) (Methanosarcina frisia).